We begin with the raw amino-acid sequence, 398 residues long: Stearoyl-[acyl-carrier-protein] 9-desaturase, chloroplastic (398 aa).

The N-terminal 34 residues, 1-34 (MALKLNPLASQPYNFPSSARPPISTFRSPKFLCL), are a transit peptide targeting the chloroplast. Residues glutamate 140, glutamate 178, histidine 181, glutamate 231, glutamate 264, and histidine 267 each coordinate Fe cation.

It belongs to the fatty acid desaturase type 2 family. In terms of assembly, homodimer. Fe(2+) is required as a cofactor.

It localises to the plastid. Its subcellular location is the chloroplast. The enzyme catalyses octadecanoyl-[ACP] + 2 reduced [2Fe-2S]-[ferredoxin] + O2 + 2 H(+) = (9Z)-octadecenoyl-[ACP] + 2 oxidized [2Fe-2S]-[ferredoxin] + 2 H2O. Its pathway is lipid metabolism; fatty acid metabolism. Its function is as follows. Converts stearoyl-ACP to oleoyl-ACP by introduction of a cis double bond between carbons 9 and 10 of the acyl chain. This is Stearoyl-[acyl-carrier-protein] 9-desaturase, chloroplastic from Brassica napus (Rape).